We begin with the raw amino-acid sequence, 345 residues long: Anthranilate phosphoribosyltransferase (345 aa).

5-phospho-alpha-D-ribose 1-diphosphate contacts are provided by residues glycine 84, 87 to 88 (GD), threonine 92, 94 to 97 (NIST), 112 to 120 (KHGGRSVSS), and serine 124. Residue glycine 84 participates in anthranilate binding. Residue serine 96 coordinates Mg(2+). Arginine 170 is an anthranilate binding site. Residues aspartate 229 and glutamate 230 each coordinate Mg(2+).

The protein belongs to the anthranilate phosphoribosyltransferase family. In terms of assembly, homodimer. Mg(2+) serves as cofactor.

The enzyme catalyses N-(5-phospho-beta-D-ribosyl)anthranilate + diphosphate = 5-phospho-alpha-D-ribose 1-diphosphate + anthranilate. It participates in amino-acid biosynthesis; L-tryptophan biosynthesis; L-tryptophan from chorismate: step 2/5. In terms of biological role, catalyzes the transfer of the phosphoribosyl group of 5-phosphorylribose-1-pyrophosphate (PRPP) to anthranilate to yield N-(5'-phosphoribosyl)-anthranilate (PRA). This chain is Anthranilate phosphoribosyltransferase, found in Leptothrix cholodnii (strain ATCC 51168 / LMG 8142 / SP-6) (Leptothrix discophora (strain SP-6)).